The primary structure comprises 572 residues: Sulfite reductase [NADPH] hemoprotein beta-component (572 aa).

Residues Cys-437, Cys-443, Cys-482, and Cys-486 each coordinate [4Fe-4S] cluster. Siroheme is bound at residue Cys-486.

The protein belongs to the nitrite and sulfite reductase 4Fe-4S domain family. In terms of assembly, alpha(8)-beta(8). The alpha component is a flavoprotein, the beta component is a hemoprotein. Siroheme serves as cofactor. [4Fe-4S] cluster is required as a cofactor.

It catalyses the reaction hydrogen sulfide + 3 NADP(+) + 3 H2O = sulfite + 3 NADPH + 4 H(+). The protein operates within sulfur metabolism; hydrogen sulfide biosynthesis; hydrogen sulfide from sulfite (NADPH route): step 1/1. In terms of biological role, component of the sulfite reductase complex that catalyzes the 6-electron reduction of sulfite to sulfide. This is one of several activities required for the biosynthesis of L-cysteine from sulfate. In Staphylococcus epidermidis (strain ATCC 12228 / FDA PCI 1200), this protein is Sulfite reductase [NADPH] hemoprotein beta-component.